The primary structure comprises 247 residues: MSGHNKWSTIRHKKGAADAKRGKVFTKLIKEITVAAKIGGGDPNGNPRLRAAVDKAKAENMPKDNIERAIKKGTGELEGVSYEEIIYEGYGPGGVAVLVECMTDNRNRTVGEVRSTFTKCNGNMGEAGCVSWMFDKKGLIVLSKDVDFEKLFETALEAGADDVADEEEQYEVLTDPAAFIDVREALEKAGFPFESAEITMIPQTMVKLDGKNAENMLKLMDRLEDNDDVQNVYANFDISTEEMEKLM.

It belongs to the TACO1 family.

It is found in the cytoplasm. The protein is Probable transcriptional regulatory protein GSU1074 of Geobacter sulfurreducens (strain ATCC 51573 / DSM 12127 / PCA).